A 229-amino-acid chain; its full sequence is Large ribosomal subunit protein uL1 (229 aa).

This sequence belongs to the universal ribosomal protein uL1 family. Part of the 50S ribosomal subunit.

Binds directly to 23S rRNA. The L1 stalk is quite mobile in the ribosome, and is involved in E site tRNA release. In terms of biological role, protein L1 is also a translational repressor protein, it controls the translation of the L11 operon by binding to its mRNA. This chain is Large ribosomal subunit protein uL1, found in Clostridium botulinum (strain 657 / Type Ba4).